The sequence spans 1887 residues: Nuclear pore membrane glycoprotein 210 (1887 aa).

The first 26 residues, 1–26 (MAARGRGLLLLTLSVLLAAGPSAAAA), serve as a signal peptide directing secretion. At 27–1808 (KLNIPKVLLP…LFQHFLDSYQ (1782 aa)) the chain is on the perinuclear space side. Residues Asn-44, Asn-337, Asn-405, Asn-484, Asn-681, Asn-801, Asn-926, Asn-1039, Asn-1116, Asn-1135, Asn-1362, and Asn-1441 are each glycosylated (N-linked (GlcNAc...) asparagine). Residues 1078–1151 (FPPFRLMPRK…VQAVDAETGK (74 aa)) form the BIG2 domain. A helical membrane pass occupies residues 1809-1829 (VMFFTLFALLAGTAVMIIAYH). At 1830–1887 (TVCTPRDLAVPAALTPRASPGHSPHYFAASSPTSPNALPPARKASPPSGLWSPAYASH) the chain is on the cytoplasmic side. Thr-1844 carries the post-translational modification Phosphothreonine. The interval 1853–1887 (PHYFAASSPTSPNALPPARKASPPSGLWSPAYASH) is disordered. Phosphoserine is present on residues Ser-1874, Ser-1877, Ser-1881, and Ser-1886.

Belongs to the NUP210 family. In terms of assembly, forms dimers and possibly higher-order oligomers. N-glycosylated, but not all potential glycosylation sites may be used. Contains high-mannose type oligosaccharides. In terms of processing, phosphorylated at Ser-1881 in mitosis specifically; not phosphorylated in interphase. Ubiquitous expression, with highest levels in lung, liver, pancreas, testis, and ovary, intermediate levels in brain, kidney, and spleen, and lowest levels in heart and skeletal muscle.

The protein localises to the nucleus. It localises to the nuclear pore complex. It is found in the nucleus membrane. The protein resides in the endoplasmic reticulum membrane. In terms of biological role, nucleoporin essential for nuclear pore assembly and fusion, nuclear pore spacing, as well as structural integrity. The chain is Nuclear pore membrane glycoprotein 210 (NUP210) from Homo sapiens (Human).